The sequence spans 159 residues: Regulatory protein RecX (159 aa).

It belongs to the RecX family.

It localises to the cytoplasm. Modulates RecA activity. The protein is Regulatory protein RecX of Chlorobium limicola (strain DSM 245 / NBRC 103803 / 6330).